The sequence spans 251 residues: Probable transcriptional regulatory protein Amuc_0709 (251 aa).

Belongs to the TACO1 family.

It localises to the cytoplasm. The chain is Probable transcriptional regulatory protein Amuc_0709 from Akkermansia muciniphila (strain ATCC BAA-835 / DSM 22959 / JCM 33894 / BCRC 81048 / CCUG 64013 / CIP 107961 / Muc).